The primary structure comprises 817 residues: LPS-assembly protein LptD (817 aa).

An N-terminal signal peptide occupies residues Met1 to Ala45.

This sequence belongs to the LptD family. As to quaternary structure, component of the lipopolysaccharide transport and assembly complex. Interacts with LptE and LptA.

The protein localises to the cell outer membrane. Together with LptE, is involved in the assembly of lipopolysaccharide (LPS) at the surface of the outer membrane. This chain is LPS-assembly protein LptD, found in Acidovorax sp. (strain JS42).